A 380-amino-acid chain; its full sequence is Cytochrome b (380 aa).

The next 4 membrane-spanning stretches (helical) occupy residues 34–54 (FGSL…LLAM), 78–99 (WLIR…YLHI), 114–134 (WNTG…GYVL), and 179–199 (FFAL…IHLT). Heme b-binding residues include H84 and H98. Residues H183 and H197 each contribute to the heme b site. An a ubiquinone-binding site is contributed by H202. 4 helical membrane passes run 227–247 (TKDT…ALFS), 289–309 (LGGV…PLLH), 321–341 (LSQL…WIGS), and 348–368 (FIII…ILFP).

This sequence belongs to the cytochrome b family. As to quaternary structure, the cytochrome bc1 complex contains 11 subunits: 3 respiratory subunits (MT-CYB, CYC1 and UQCRFS1), 2 core proteins (UQCRC1 and UQCRC2) and 6 low-molecular weight proteins (UQCRH/QCR6, UQCRB/QCR7, UQCRQ/QCR8, UQCR10/QCR9, UQCR11/QCR10 and a cleavage product of UQCRFS1). This cytochrome bc1 complex then forms a dimer. Requires heme b as cofactor.

The protein localises to the mitochondrion inner membrane. In terms of biological role, component of the ubiquinol-cytochrome c reductase complex (complex III or cytochrome b-c1 complex) that is part of the mitochondrial respiratory chain. The b-c1 complex mediates electron transfer from ubiquinol to cytochrome c. Contributes to the generation of a proton gradient across the mitochondrial membrane that is then used for ATP synthesis. This chain is Cytochrome b (MT-CYB), found in Aptenodytes patagonicus (King penguin).